A 379-amino-acid chain; its full sequence is Epoxyqueuosine reductase (379 aa).

Aspartate 140 serves as the catalytic Proton donor. The 4Fe-4S ferredoxin-type domain occupies 184-214 (FEPDTPASDLCGSCNQCVKACPTGSLLGEGK). [4Fe-4S] cluster contacts are provided by cysteine 194, cysteine 197, cysteine 200, cysteine 204, cysteine 220, cysteine 246, cysteine 249, and cysteine 253. Residues 307–332 (QRNAIIILARYKDKTAVPDLIDCLQN) form an HEAT-like PBS-type repeat.

Belongs to the QueG family. In terms of assembly, monomer. Cob(II)alamin serves as cofactor. It depends on [4Fe-4S] cluster as a cofactor.

It localises to the cytoplasm. The catalysed reaction is epoxyqueuosine(34) in tRNA + AH2 = queuosine(34) in tRNA + A + H2O. It functions in the pathway tRNA modification; tRNA-queuosine biosynthesis. In terms of biological role, catalyzes the conversion of epoxyqueuosine (oQ) to queuosine (Q), which is a hypermodified base found in the wobble positions of tRNA(Asp), tRNA(Asn), tRNA(His) and tRNA(Tyr). This Listeria monocytogenes serovar 1/2a (strain ATCC BAA-679 / EGD-e) protein is Epoxyqueuosine reductase.